Reading from the N-terminus, the 725-residue chain is Glutamine-dependent NAD(+) synthetase (725 aa).

Residues 4-274 (LKVATCNLNQ…VEVIISQVDL (271 aa)) form the CN hydrolase domain. The active-site Proton acceptor; for glutaminase activity is the Glu-44. The For glutaminase activity role is filled by Lys-113. Cys-174 functions as the Nucleophile; for glutaminase activity in the catalytic mechanism. The tract at residues 324 to 709 (YHSPQEEIAF…FPEEEANSNK (386 aa)) is ligase. ATP is bound at residue 354–361 (PLSGGADS). Residue Ser-356 is part of the active site.

This sequence in the C-terminal section; belongs to the NAD synthetase family.

The catalysed reaction is deamido-NAD(+) + L-glutamine + ATP + H2O = L-glutamate + AMP + diphosphate + NAD(+) + H(+). It participates in cofactor biosynthesis; NAD(+) biosynthesis; NAD(+) from deamido-NAD(+) (L-Gln route): step 1/1. This is Glutamine-dependent NAD(+) synthetase from Arabidopsis thaliana (Mouse-ear cress).